A 336-amino-acid chain; its full sequence is Ornithine carbamoyltransferase, catabolic (336 aa).

Carbamoyl phosphate is bound by residues 57–60 (STRT), Gln-84, Arg-108, and 135–138 (HPTQ). L-ornithine-binding positions include Asn-168, Asp-232, and 236-237 (SM). Residues 274-275 (CL) and Arg-321 each bind carbamoyl phosphate.

It belongs to the aspartate/ornithine carbamoyltransferase superfamily. OTCase family.

It localises to the cytoplasm. The catalysed reaction is carbamoyl phosphate + L-ornithine = L-citrulline + phosphate + H(+). Its pathway is amino-acid degradation; L-arginine degradation via ADI pathway; carbamoyl phosphate from L-arginine: step 2/2. Reversibly catalyzes the transfer of the carbamoyl group from carbamoyl phosphate (CP) to the N(epsilon) atom of ornithine (ORN) to produce L-citrulline. This is Ornithine carbamoyltransferase, catabolic (arcB) from Ectopseudomonas mendocina (Pseudomonas mendocina).